Consider the following 303-residue polypeptide: NAD kinase (303 aa).

Asp-85 functions as the Proton acceptor in the catalytic mechanism. Residues 85-86 (DG), Arg-90, 159-160 (ND), Lys-187, Asp-189, Ala-224, and Gln-259 contribute to the NAD(+) site.

It belongs to the NAD kinase family. Requires a divalent metal cation as cofactor.

It localises to the cytoplasm. It catalyses the reaction NAD(+) + ATP = ADP + NADP(+) + H(+). Functionally, involved in the regulation of the intracellular balance of NAD and NADP, and is a key enzyme in the biosynthesis of NADP. Catalyzes specifically the phosphorylation on 2'-hydroxyl of the adenosine moiety of NAD to yield NADP. The polypeptide is NAD kinase (Bdellovibrio bacteriovorus (strain ATCC 15356 / DSM 50701 / NCIMB 9529 / HD100)).